We begin with the raw amino-acid sequence, 700 residues long: Beta-galactosidase Bga (700 aa).

Arg-103 serves as a coordination point for substrate. Residue Cys-107 coordinates Zn(2+). Asn-141 is a binding site for substrate. The Proton donor role is filled by Glu-142. Residues Cys-151, Cys-153, and Cys-156 each contribute to the Zn(2+) site. Glu-312 functions as the Nucleophile in the catalytic mechanism. Substrate-binding positions include Trp-320 and 360 to 363 (EQYH). The segment covering 648 to 658 (DPESLAVDDTD) has biased composition (acidic residues). The segment at 648-674 (DPESLAVDDTDRDGFDPMADDDKDSSA) is disordered.

This sequence belongs to the glycosyl hydrolase 42 family.

It catalyses the reaction Hydrolysis of terminal non-reducing beta-D-galactose residues in beta-D-galactosides.. Requires 4 M NaCl or KCl for maximal activity. Cleaves o-nitrophenyl-beta-D-galactopyranoside (ONPG) in vitro. The sequence is that of Beta-galactosidase Bga from Halorubrum lacusprofundi (strain ATCC 49239 / DSM 5036 / JCM 8891 / ACAM 34).